The following is a 238-amino-acid chain: Small ribosomal subunit protein uS2 (238 aa).

This sequence belongs to the universal ribosomal protein uS2 family.

In Synechococcus sp. (strain CC9605), this protein is Small ribosomal subunit protein uS2.